A 425-amino-acid chain; its full sequence is Enolase (425 aa).

Gln-162 provides a ligand contact to (2R)-2-phosphoglycerate. Glu-204 functions as the Proton donor in the catalytic mechanism. Mg(2+) contacts are provided by Asp-241, Glu-284, and Asp-311. (2R)-2-phosphoglycerate contacts are provided by Lys-336, Arg-365, Ser-366, and Lys-387. The Proton acceptor role is filled by Lys-336.

The protein belongs to the enolase family. It depends on Mg(2+) as a cofactor.

The protein localises to the cytoplasm. The protein resides in the secreted. It localises to the cell surface. It catalyses the reaction (2R)-2-phosphoglycerate = phosphoenolpyruvate + H2O. It functions in the pathway carbohydrate degradation; glycolysis; pyruvate from D-glyceraldehyde 3-phosphate: step 4/5. In terms of biological role, catalyzes the reversible conversion of 2-phosphoglycerate (2-PG) into phosphoenolpyruvate (PEP). It is essential for the degradation of carbohydrates via glycolysis. The chain is Enolase from Brucella ovis (strain ATCC 25840 / 63/290 / NCTC 10512).